The chain runs to 413 residues: Divalent metal cation transporter MntH (413 aa).

The Cytoplasmic portion of the chain corresponds to M1 to L19. Residues A20–A39 traverse the membrane as a helical segment. Topologically, residues T40–Q51 are periplasmic. A helical membrane pass occupies residues L52–A71. Residues K72–W95 are Cytoplasmic-facing. A helical transmembrane segment spans residues F96 to I118. The Periplasmic portion of the chain corresponds to G119–G125. Residues V126–L145 form a helical membrane-spanning segment. The Cytoplasmic portion of the chain corresponds to Q146–K155. A helical membrane pass occupies residues V156–S175. The Periplasmic segment spans residues Q176–A196. A helical membrane pass occupies residues V197–T220. Topologically, residues Q221–D238 are cytoplasmic. A helical transmembrane segment spans residues V239 to A258. Over A259–Y276 the chain is Periplasmic. The chain crosses the membrane as a helical span at residues L277–A297. The Cytoplasmic segment spans residues A298–R327. A helical transmembrane segment spans residues R328–D344. The Periplasmic portion of the chain corresponds to P345–V350. A helical membrane pass occupies residues M351–F370. Residues T371 to K387 are Cytoplasmic-facing. A helical membrane pass occupies residues Q388 to V406. Topologically, residues G407–S413 are periplasmic.

The protein belongs to the NRAMP family.

Its subcellular location is the cell inner membrane. H(+)-stimulated, divalent metal cation uptake system. This chain is Divalent metal cation transporter MntH, found in Salmonella schwarzengrund (strain CVM19633).